Consider the following 91-residue polypeptide: Small ribosomal subunit protein uS19 (91 aa).

Belongs to the universal ribosomal protein uS19 family.

Functionally, protein S19 forms a complex with S13 that binds strongly to the 16S ribosomal RNA. The chain is Small ribosomal subunit protein uS19 from Synechococcus sp. (strain WH7803).